The primary structure comprises 270 residues: 4-hydroxy-tetrahydrodipicolinate reductase (270 aa).

NAD(+) contacts are provided by residues 9-14 (GAGGRM) and E35. R36 lines the NADP(+) pocket. NAD(+) is bound by residues 99 to 101 (GTT) and 123 to 126 (ASNF). H156 serves as the catalytic Proton donor/acceptor. H157 lines the (S)-2,3,4,5-tetrahydrodipicolinate pocket. The active-site Proton donor is K160. Residue 166–167 (GT) coordinates (S)-2,3,4,5-tetrahydrodipicolinate.

The protein belongs to the DapB family.

Its subcellular location is the cytoplasm. The enzyme catalyses (S)-2,3,4,5-tetrahydrodipicolinate + NAD(+) + H2O = (2S,4S)-4-hydroxy-2,3,4,5-tetrahydrodipicolinate + NADH + H(+). It catalyses the reaction (S)-2,3,4,5-tetrahydrodipicolinate + NADP(+) + H2O = (2S,4S)-4-hydroxy-2,3,4,5-tetrahydrodipicolinate + NADPH + H(+). It participates in amino-acid biosynthesis; L-lysine biosynthesis via DAP pathway; (S)-tetrahydrodipicolinate from L-aspartate: step 4/4. Functionally, catalyzes the conversion of 4-hydroxy-tetrahydrodipicolinate (HTPA) to tetrahydrodipicolinate. The polypeptide is 4-hydroxy-tetrahydrodipicolinate reductase (Pasteurella multocida (strain Pm70)).